The chain runs to 95 residues: MTKSELIERLASQQSHIPAKAVEDAVKEMLEHMASTLAQGERIEIRGFGSFSLHYRAPRTGRNPKTGDKVELEGKYVPHFKPGKELRDRANIYEE.

It belongs to the bacterial histone-like protein family. As to quaternary structure, heterodimer of an alpha and a beta chain.

In terms of biological role, this protein is one of the two subunits of integration host factor, a specific DNA-binding protein that functions in genetic recombination as well as in transcriptional and translational control. The polypeptide is Integration host factor subunit beta (Klebsiella pneumoniae (strain 342)).